Reading from the N-terminus, the 222-residue chain is Pre-mRNA cleavage factor Im 25 kDa subunit 1 (222 aa).

Residues 67 to 194 form the Nudix hydrolase domain; it reads GLRTCVEAVL…KLLAVPLCQL (128 aa). The interaction with RNA stretch occupies residues 94–96; sequence SIF. Positions 101 to 122 match the Nudix box motif; sequence GRLRPGESDIEGLKRKLASKLS.

It belongs to the Nudix hydrolase family. CPSF5 subfamily. In terms of assembly, homodimer. Component of the cleavage factor Im (CFIm) complex. Forms a complex with cleavage and polyadenylation specificity factor (CPSF) subunits FIPS5.

It localises to the nucleus. Functionally, component of the cleavage factor Im (CFIm) complex that plays a key role in pre-mRNA 3'-processing. Involved in association with CPSF6 or CPSF7 in pre-MRNA 3'-end poly(A) site cleavage and poly(A) addition. NUDT21/CPSF5 binds to cleavage and polyadenylation RNA substrates. The homodimer mediates simultaneous sequence-specific recognition of two 5'-UGUA-3' elements within the pre-mRNA. Binds to, but does not hydrolyze mono- and di-adenosine nucleotides. May have a role in mRNA export. In Arabidopsis thaliana (Mouse-ear cress), this protein is Pre-mRNA cleavage factor Im 25 kDa subunit 1.